We begin with the raw amino-acid sequence, 91 residues long: Large ribosomal subunit protein bL31B (91 aa).

This sequence belongs to the bacterial ribosomal protein bL31 family. Type B subfamily. As to quaternary structure, part of the 50S ribosomal subunit.

This is Large ribosomal subunit protein bL31B from Neisseria meningitidis serogroup A / serotype 4A (strain DSM 15465 / Z2491).